The following is a 506-amino-acid chain: ATP synthase subunit alpha (506 aa).

An ATP-binding site is contributed by 170–177; it reads GDRQTGKT.

This sequence belongs to the ATPase alpha/beta chains family. In terms of assembly, F-type ATPases have 2 components, CF(1) - the catalytic core - and CF(0) - the membrane proton channel. CF(1) has five subunits: alpha(3), beta(3), gamma(1), delta(1), epsilon(1). CF(0) has four main subunits: a(1), b(1), b'(1) and c(9-12).

It is found in the cellular thylakoid membrane. It carries out the reaction ATP + H2O + 4 H(+)(in) = ADP + phosphate + 5 H(+)(out). Produces ATP from ADP in the presence of a proton gradient across the membrane. The alpha chain is a regulatory subunit. The sequence is that of ATP synthase subunit alpha from Synechococcus sp. (strain CC9311).